The chain runs to 410 residues: Phospho-N-acetylmuramoyl-pentapeptide-transferase (410 aa).

The next 10 membrane-spanning stretches (helical) occupy residues 27–47, 77–97, 99–119, 140–160, 213–233, 248–268, 288–308, 312–332, 337–357, and 389–409; these read RMIL…PYFI, TPTM…VLWM, LTHI…LIGG, LFFQ…SSVN, PVVT…FFVI, GLLA…AFVS, IAIY…YNGY, VFMG…SAVL, FLLG…ILQV, and VIRF…SLKF.

Belongs to the glycosyltransferase 4 family. MraY subfamily. Mg(2+) is required as a cofactor.

It localises to the cell inner membrane. The enzyme catalyses UDP-N-acetyl-alpha-D-muramoyl-L-alanyl-gamma-D-glutamyl-meso-2,6-diaminopimeloyl-D-alanyl-D-alanine + di-trans,octa-cis-undecaprenyl phosphate = di-trans,octa-cis-undecaprenyl diphospho-N-acetyl-alpha-D-muramoyl-L-alanyl-D-glutamyl-meso-2,6-diaminopimeloyl-D-alanyl-D-alanine + UMP. Its pathway is cell wall biogenesis; peptidoglycan biosynthesis. Functionally, catalyzes the initial step of the lipid cycle reactions in the biosynthesis of the cell wall peptidoglycan: transfers peptidoglycan precursor phospho-MurNAc-pentapeptide from UDP-MurNAc-pentapeptide onto the lipid carrier undecaprenyl phosphate, yielding undecaprenyl-pyrophosphoryl-MurNAc-pentapeptide, known as lipid I. The polypeptide is Phospho-N-acetylmuramoyl-pentapeptide-transferase (Protochlamydia amoebophila (strain UWE25)).